The sequence spans 213 residues: N-(5'-phosphoribosyl)anthranilate isomerase (213 aa).

This sequence belongs to the TrpF family.

The catalysed reaction is N-(5-phospho-beta-D-ribosyl)anthranilate = 1-(2-carboxyphenylamino)-1-deoxy-D-ribulose 5-phosphate. It functions in the pathway amino-acid biosynthesis; L-tryptophan biosynthesis; L-tryptophan from chorismate: step 3/5. The sequence is that of N-(5'-phosphoribosyl)anthranilate isomerase from Methylibium petroleiphilum (strain ATCC BAA-1232 / LMG 22953 / PM1).